We begin with the raw amino-acid sequence, 799 residues long: MVLPILPLIDDLASWNSKKEYVSLVGQVLLDGSSLSNEEILQFSKEEEVPLVALSLPSGKFSDDEIIAFLNNGVSSLFIASQDAKTAEHLVEQLNVPKERVVVEENGVFSNQFMVKQKFSQDKIVSIKKLSKDMLTKEVLGEVRTDRPDGLYTTLVVDQYERCLGLVYSSKKSIAKAIDLGRGVYYSRSRNEIWIKGETSGNGQKLLQISTDCDSDALKFIVEQENVGFCHLETMSCFGEFKHGLVGLESLLKQRLQDAPEESYTRRLFNDSALLDAKIKEEAEELTEAKGKKELSWEAADLFYFALAKLVANDVSLKDVENNLNMKHLKVTRRKGDAKPKFVGQPKAEEEKLTGPIHLDVVKASDKVGVQKALSRPIQKTSEIMHLVNPIIENVRDKGNSALLEYTEKFDGVKLSNPVLNAPFPEEYFEGLTEEMKEALDLSIENVRKFHAAQLPTETLEVETQPGVLCSRFPRPIEKVGLYIPGGTAILPSTALMLGVPAQVAQCKEIVFASPPRKSDGKVSPEVVYVAEKVGASKIVLAGGAQAVAAMAYGTETIPKVDKILGPGNQFVTAAKMYVQNDTQALCSIDMPAGPSEVLVIADEDADVDFVASDLLSQAEHGIDSQVILVGVNLSEKKIQEIQDAVHNQALQLPRVDIVRKCIAHSTIVLCDGYEEALEMSNQYAPEHLILQIANANDYVKLVDNAGSVFVGAYTPESCGDYSSGTNHTLPTYGYARQYSGANTATFQKFITAQNITPEGLENIGRAVMCVAKKEGLDGHRNAVKIRMSKLGLIPKDFQ.

The interval 1–229 (MVLPILPLID…FIVEQENVGF (229 aa)) is phosphoribosyl-AMP cyclohydrolase. Positions 230 to 312 (CHLETMSCFG…FYFALAKLVA (83 aa)) are phosphoribosyl-ATP pyrophosphohydrolase. The histidinol dehydrogenase stretch occupies residues 313–799 (NDVSLKDVEN…KLGLIPKDFQ (487 aa)). Residues glutamine 618 and histidine 621 each coordinate Zn(2+). Active-site residues include glutamate 687 and histidine 688. Residues aspartate 721 and histidine 780 each contribute to the Zn(2+) site.

It in the C-terminal section; belongs to the histidinol dehydrogenase family. Zn(2+) is required as a cofactor.

The catalysed reaction is 1-(5-phospho-beta-D-ribosyl)-5'-AMP + H2O = 1-(5-phospho-beta-D-ribosyl)-5-[(5-phospho-beta-D-ribosylamino)methylideneamino]imidazole-4-carboxamide. It catalyses the reaction 1-(5-phospho-beta-D-ribosyl)-ATP + H2O = 1-(5-phospho-beta-D-ribosyl)-5'-AMP + diphosphate + H(+). The enzyme catalyses L-histidinol + 2 NAD(+) + H2O = L-histidine + 2 NADH + 3 H(+). It functions in the pathway amino-acid biosynthesis; L-histidine biosynthesis; L-histidine from 5-phospho-alpha-D-ribose 1-diphosphate: step 2/9. It participates in amino-acid biosynthesis; L-histidine biosynthesis; L-histidine from 5-phospho-alpha-D-ribose 1-diphosphate: step 3/9. The protein operates within amino-acid biosynthesis; L-histidine biosynthesis; L-histidine from 5-phospho-alpha-D-ribose 1-diphosphate: step 9/9. The polypeptide is Histidine biosynthesis trifunctional protein (Saccharomyces cerevisiae (strain ATCC 204508 / S288c) (Baker's yeast)).